The sequence spans 343 residues: Glycerol-3-phosphate dehydrogenase [NAD(P)+] (343 aa).

5 residues coordinate NADPH: Ser11, Trp12, His32, Arg33, and Lys106. Sn-glycerol 3-phosphate contacts are provided by Lys106, Gly136, and Ser138. Ala140 is a binding site for NADPH. 5 residues coordinate sn-glycerol 3-phosphate: Lys192, Asp245, Ser255, Arg256, and Asn257. Lys192 acts as the Proton acceptor in catalysis. Arg256 lines the NADPH pocket. Residues Val280 and Glu282 each contribute to the NADPH site.

It belongs to the NAD-dependent glycerol-3-phosphate dehydrogenase family.

It is found in the cytoplasm. The catalysed reaction is sn-glycerol 3-phosphate + NAD(+) = dihydroxyacetone phosphate + NADH + H(+). The enzyme catalyses sn-glycerol 3-phosphate + NADP(+) = dihydroxyacetone phosphate + NADPH + H(+). It functions in the pathway membrane lipid metabolism; glycerophospholipid metabolism. Catalyzes the reduction of the glycolytic intermediate dihydroxyacetone phosphate (DHAP) to sn-glycerol 3-phosphate (G3P), the key precursor for phospholipid synthesis. This Geobacillus thermodenitrificans (strain NG80-2) protein is Glycerol-3-phosphate dehydrogenase [NAD(P)+].